A 1036-amino-acid polypeptide reads, in one-letter code: Multidrug resistance protein MdtC (1036 aa).

Transmembrane regions (helical) follow at residues Val12 to Val34, Arg336 to Leu353, Leu360 to Phe382, Val431 to Leu450, Phe463 to Met485, Trp528 to Ile547, Leu853 to Ile875, Leu895 to Val917, Leu949 to Ser971, and Ile986 to Phe1008.

The protein belongs to the resistance-nodulation-cell division (RND) (TC 2.A.6) family. MdtC subfamily. In terms of assembly, part of a tripartite efflux system composed of MdtA, MdtB and MdtC. MdtC forms a heteromultimer with MdtB.

The protein resides in the cell inner membrane. In Photorhabdus laumondii subsp. laumondii (strain DSM 15139 / CIP 105565 / TT01) (Photorhabdus luminescens subsp. laumondii), this protein is Multidrug resistance protein MdtC.